A 176-amino-acid polypeptide reads, in one-letter code: 3-hydroxyacyl-[acyl-carrier-protein] dehydratase FabZ (176 aa).

Residue histidine 54 is part of the active site.

The protein belongs to the thioester dehydratase family. FabZ subfamily.

The protein resides in the cytoplasm. The catalysed reaction is a (3R)-hydroxyacyl-[ACP] = a (2E)-enoyl-[ACP] + H2O. In terms of biological role, involved in unsaturated fatty acids biosynthesis. Catalyzes the dehydration of short chain beta-hydroxyacyl-ACPs and long chain saturated and unsaturated beta-hydroxyacyl-ACPs. This Yersinia pseudotuberculosis serotype O:1b (strain IP 31758) protein is 3-hydroxyacyl-[acyl-carrier-protein] dehydratase FabZ.